The sequence spans 176 residues: NADH-quinone oxidoreductase subunit I 2 (176 aa).

4Fe-4S ferredoxin-type domains follow at residues 45–77 (IVLT…MEAA) and 87–116 (RWFR…MTPD). Cys-57, Cys-60, Cys-63, Cys-67, Cys-96, Cys-99, Cys-102, and Cys-106 together coordinate [4Fe-4S] cluster.

This sequence belongs to the complex I 23 kDa subunit family. In terms of assembly, NDH-1 is composed of 14 different subunits. Subunits NuoA, H, J, K, L, M, N constitute the membrane sector of the complex. [4Fe-4S] cluster is required as a cofactor.

It localises to the cell inner membrane. The catalysed reaction is a quinone + NADH + 5 H(+)(in) = a quinol + NAD(+) + 4 H(+)(out). Functionally, NDH-1 shuttles electrons from NADH, via FMN and iron-sulfur (Fe-S) centers, to quinones in the respiratory chain. The immediate electron acceptor for the enzyme in this species is believed to be ubiquinone. Couples the redox reaction to proton translocation (for every two electrons transferred, four hydrogen ions are translocated across the cytoplasmic membrane), and thus conserves the redox energy in a proton gradient. This Geobacter sulfurreducens (strain ATCC 51573 / DSM 12127 / PCA) protein is NADH-quinone oxidoreductase subunit I 2.